The chain runs to 111 residues: Phosphoribosyl-ATP pyrophosphatase (111 aa).

The protein belongs to the PRA-PH family.

Its subcellular location is the cytoplasm. The enzyme catalyses 1-(5-phospho-beta-D-ribosyl)-ATP + H2O = 1-(5-phospho-beta-D-ribosyl)-5'-AMP + diphosphate + H(+). It functions in the pathway amino-acid biosynthesis; L-histidine biosynthesis; L-histidine from 5-phospho-alpha-D-ribose 1-diphosphate: step 2/9. This Pseudomonas entomophila (strain L48) protein is Phosphoribosyl-ATP pyrophosphatase.